The following is a 22-amino-acid chain: Cysteine proteinase (22 aa).

The disordered stretch occupies residues 1 to 22; the sequence is GADDSDWRKKGAVNVIXKDQGQ.

This sequence belongs to the peptidase C1 family.

The protein is Cysteine proteinase of Trichomonas vaginalis.